Consider the following 410-residue polypeptide: Gamma-glutamyl phosphate reductase (410 aa).

This sequence belongs to the gamma-glutamyl phosphate reductase family.

Its subcellular location is the cytoplasm. It carries out the reaction L-glutamate 5-semialdehyde + phosphate + NADP(+) = L-glutamyl 5-phosphate + NADPH + H(+). It participates in amino-acid biosynthesis; L-proline biosynthesis; L-glutamate 5-semialdehyde from L-glutamate: step 2/2. Catalyzes the NADPH-dependent reduction of L-glutamate 5-phosphate into L-glutamate 5-semialdehyde and phosphate. The product spontaneously undergoes cyclization to form 1-pyrroline-5-carboxylate. In Campylobacter jejuni subsp. jejuni serotype O:23/36 (strain 81-176), this protein is Gamma-glutamyl phosphate reductase.